The sequence spans 431 residues: Adenylosuccinate synthetase 2 (431 aa).

GTP-binding positions include 13 to 19 (GDEGKGK) and 41 to 43 (GHT). The active-site Proton acceptor is Asp14. Mg(2+) contacts are provided by Asp14 and Gly41. Residues 14-17 (DEGK), 39-42 (NAGH), Thr130, Arg144, Gln225, Thr240, and Arg304 contribute to the IMP site. His42 acts as the Proton donor in catalysis. Residue 300-306 (SVTGRPR) coordinates substrate. Residues Arg306, 332–334 (KLD), and 414–416 (STG) each bind GTP.

The protein belongs to the adenylosuccinate synthetase family. As to quaternary structure, homodimer. Mg(2+) is required as a cofactor.

The protein resides in the cytoplasm. The enzyme catalyses IMP + L-aspartate + GTP = N(6)-(1,2-dicarboxyethyl)-AMP + GDP + phosphate + 2 H(+). It participates in purine metabolism; AMP biosynthesis via de novo pathway; AMP from IMP: step 1/2. Functionally, plays an important role in the de novo pathway of purine nucleotide biosynthesis. Catalyzes the first committed step in the biosynthesis of AMP from IMP. In Chromobacterium violaceum (strain ATCC 12472 / DSM 30191 / JCM 1249 / CCUG 213 / NBRC 12614 / NCIMB 9131 / NCTC 9757 / MK), this protein is Adenylosuccinate synthetase 2.